A 158-amino-acid polypeptide reads, in one-letter code: Ribonuclease H (158 aa).

Residues 3 to 144 enclose the RNase H type-1 domain; it reads ELKLIHIFTD…CDQLARAAAE (142 aa). Residues D12, E50, D72, and D136 each coordinate Mg(2+). The tract at residues 137–158 is disordered; sequence QLARAAAEASPTQVDEGYQPES.

The protein belongs to the RNase H family. As to quaternary structure, monomer. Mg(2+) is required as a cofactor.

Its subcellular location is the cytoplasm. The enzyme catalyses Endonucleolytic cleavage to 5'-phosphomonoester.. In terms of biological role, endonuclease that specifically degrades the RNA of RNA-DNA hybrids. This is Ribonuclease H from Shewanella sp. (strain ANA-3).